The primary structure comprises 176 residues: Transmembrane protein 238 (176 aa).

Positions 1 to 21 (MAAASPVCGSQASAVGASSPP) are disordered. Topologically, residues 1 to 36 (MAAASPVCGSQASAVGASSPPAPAPAPAAGLGRCRM) are cytoplasmic. Over residues 9-19 (GSQASAVGASS) the composition is skewed to low complexity. A helical transmembrane segment spans residues 37–57 (ALLLAVALDVAGMAALLTGVF). Over 58-69 (AQLQVRGRDFGD) the chain is Extracellular. The helical transmembrane segment at 70–90 (LLIYSGALLVFLSLLGWILWY) threads the bilayer. Residues 91–176 (TGNIEISRQE…GSVAAGTGSE (86 aa)) are Cytoplasmic-facing. Residues 124–135 (SAPATASPRTTA) are compositionally biased toward low complexity. The disordered stretch occupies residues 124-156 (SAPATASPRTTAGLRSARRANRAPQPSSSGSRR). Ser-175 carries the post-translational modification Phosphoserine.

The protein localises to the membrane. The sequence is that of Transmembrane protein 238 (Tmem238) from Mus musculus (Mouse).